A 433-amino-acid chain; its full sequence is MKKYLLYMVQVHLNFRRAELESLADLYNLSIDFSQYDANSPFFIVELENDQQAKDWIKRSILTRGIYEYWGQGTTLDELHKDIQRQSNFEQDLQLKFKHSTFKFEFECYKGNSKAKRVEQIETFRYLGFEGKIDMKHPQEVFTVIEEYTPISENVGGKTPTRIYFGRQVQMSNRSAMEKYDLKKRPYKGTTSFEAELSLVSANIAQVKPGTIMYDPFAGTGSFLVAGGHFGSLVIGSDIDGRMIRGKGAQVNISANFKKYGESSQFLDVLTMDFTNNALRNNLVIDTILCDPPYGIRESIKVLGAKDPERFLGKEDMEIDGEKAYLRRDYIPTKKPYALDSLLDDLLQYSSERLPIGGRLAFWMPTANDANIETIVPMHENLELKYNCVQEFNKWSRRLLVYINRGSTFNGSSNHGIKRSKDNFRERYFNNFN.

This sequence belongs to the class I-like SAM-binding methyltransferase superfamily. TRM11 methyltransferase family. As to quaternary structure, interacts with TRM112.

Its subcellular location is the cytoplasm. The catalysed reaction is guanosine(10) in tRNA + S-adenosyl-L-methionine = N(2)-methylguanosine(10) in tRNA + S-adenosyl-L-homocysteine + H(+). Functionally, catalytic subunit of an S-adenosyl-L-methionine-dependent tRNA methyltransferase complex that mediates the methylation of the guanosine nucleotide at position 10 (m2G10) in tRNAs. In Saccharomyces cerevisiae (strain ATCC 204508 / S288c) (Baker's yeast), this protein is tRNA (guanine(10)-N(2))-methyltransferase (TRM11).